Here is a 1109-residue protein sequence, read N- to C-terminus: Carbamoyl phosphate synthase large chain (1109 aa).

The segment at 1–402 is carboxyphosphate synthetic domain; it reads MPKRTDLKSV…ALQKALRSLE (402 aa). Residues R129, R169, G175, G176, E208, I210, E215, G241, V242, H243, Q285, and E299 each coordinate ATP. Residues 133–328 enclose the ATP-grasp 1 domain; that stretch reads KGVVERCGAE…IAKIATKLSL (196 aa). Q285, E299, and N301 together coordinate Mg(2+). Positions 285, 299, and 301 each coordinate Mn(2+). The oligomerization domain stretch occupies residues 403 to 546; that stretch reads QKGSQLDFSS…YHYSAYDEED (144 aa). A carbamoyl phosphate synthetic domain region spans residues 547–950; the sequence is EVALHSKPSI…AFAKSQAGAN (404 aa). The ATP-grasp 2 domain maps to 677–868; it reads SRVLDKAGLV…MAKAAALIGT (192 aa). Residues R713, R752, L754, E759, G784, I785, H786, S787, Q827, and E839 each coordinate ATP. Residues Q827, E839, and N841 each coordinate Mg(2+). Positions 827, 839, and 841 each coordinate Mn(2+). The MGS-like domain maps to 951–1096; it reads NALPTEGKVF…QEHAAALGES (146 aa). Residues 951–1109 form an allosteric domain region; sequence NALPTEGKVF…AAAKADLQHA (159 aa).

This sequence belongs to the CarB family. As to quaternary structure, composed of two chains; the small (or glutamine) chain promotes the hydrolysis of glutamine to ammonia, which is used by the large (or ammonia) chain to synthesize carbamoyl phosphate. Tetramer of heterodimers (alpha,beta)4. It depends on Mg(2+) as a cofactor. Mn(2+) serves as cofactor.

The enzyme catalyses hydrogencarbonate + L-glutamine + 2 ATP + H2O = carbamoyl phosphate + L-glutamate + 2 ADP + phosphate + 2 H(+). It catalyses the reaction hydrogencarbonate + NH4(+) + 2 ATP = carbamoyl phosphate + 2 ADP + phosphate + 2 H(+). It functions in the pathway amino-acid biosynthesis; L-arginine biosynthesis; carbamoyl phosphate from bicarbonate: step 1/1. It participates in pyrimidine metabolism; UMP biosynthesis via de novo pathway; (S)-dihydroorotate from bicarbonate: step 1/3. Its function is as follows. Large subunit of the glutamine-dependent carbamoyl phosphate synthetase (CPSase). CPSase catalyzes the formation of carbamoyl phosphate from the ammonia moiety of glutamine, carbonate, and phosphate donated by ATP, constituting the first step of 2 biosynthetic pathways, one leading to arginine and/or urea and the other to pyrimidine nucleotides. The large subunit (synthetase) binds the substrates ammonia (free or transferred from glutamine from the small subunit), hydrogencarbonate and ATP and carries out an ATP-coupled ligase reaction, activating hydrogencarbonate by forming carboxy phosphate which reacts with ammonia to form carbamoyl phosphate. The polypeptide is Carbamoyl phosphate synthase large chain (Pseudarthrobacter chlorophenolicus (strain ATCC 700700 / DSM 12829 / CIP 107037 / JCM 12360 / KCTC 9906 / NCIMB 13794 / A6) (Arthrobacter chlorophenolicus)).